Reading from the N-terminus, the 112-residue chain is Nucleoid-associated protein lpp2803 (112 aa).

This sequence belongs to the YbaB/EbfC family. Homodimer.

It localises to the cytoplasm. The protein resides in the nucleoid. Functionally, binds to DNA and alters its conformation. May be involved in regulation of gene expression, nucleoid organization and DNA protection. The chain is Nucleoid-associated protein lpp2803 from Legionella pneumophila (strain Paris).